Here is a 350-residue protein sequence, read N- to C-terminus: Nicotinate-nucleotide--dimethylbenzimidazole phosphoribosyltransferase (350 aa).

Catalysis depends on Glu316, which acts as the Proton acceptor.

This sequence belongs to the CobT family.

It catalyses the reaction 5,6-dimethylbenzimidazole + nicotinate beta-D-ribonucleotide = alpha-ribazole 5'-phosphate + nicotinate + H(+). The protein operates within nucleoside biosynthesis; alpha-ribazole biosynthesis; alpha-ribazole from 5,6-dimethylbenzimidazole: step 1/2. Its function is as follows. Catalyzes the synthesis of alpha-ribazole-5'-phosphate from nicotinate mononucleotide (NAMN) and 5,6-dimethylbenzimidazole (DMB). This chain is Nicotinate-nucleotide--dimethylbenzimidazole phosphoribosyltransferase, found in Pseudomonas syringae pv. tomato (strain ATCC BAA-871 / DC3000).